The chain runs to 569 residues: Phosphoglucomutase 2 (569 aa).

Positions 1 to 23 (MSFQIETVPTKPYEDQKPGTSGL) are disordered. S2 carries the post-translational modification N-acetylserine. Residue R24 participates in alpha-D-glucose 1,6-bisphosphate binding. Phosphothreonine occurs at positions 111 and 117. S119 is an alpha-D-glucose 1,6-bisphosphate binding site. S119 functions as the Phosphoserine intermediate in the catalytic mechanism. Positions 119, 290, 292, and 294 each coordinate Mg(2+). Phosphoserine is present on S119. D294, R295, T359, E378, S380, and K391 together coordinate alpha-D-glucose 1,6-bisphosphate.

The protein belongs to the phosphohexose mutase family. As to quaternary structure, monomer. The cofactor is Mg(2+). It depends on Zn(2+) as a cofactor. In terms of processing, O-glycosylated with mannose residues. Substrate of UDP-glucose--glycoprotein glucose phosphotransferase, linking glucose in a phosphodiester linkage to O-linked mannose.

The protein resides in the cytoplasm. The enzyme catalyses alpha-D-glucose 1-phosphate = alpha-D-glucose 6-phosphate. The catalysed reaction is O-phospho-L-seryl-[protein] + alpha-D-glucose 1-phosphate = alpha-D-glucose 1,6-bisphosphate + L-seryl-[protein]. It carries out the reaction alpha-D-glucose 1,6-bisphosphate + L-seryl-[protein] = O-phospho-L-seryl-[protein] + alpha-D-glucose 6-phosphate. Its function is as follows. Major phosphoglucomutase isozyme that catalyzes the reversible isomerization of alpha-D-glucose 1-phosphate to alpha-D-glucose 6-phosphate. The mechanism proceeds via the intermediate compound alpha-D-glucose 1,6-bisphosphate. Constitutes about 80-90% of the phosphoglucomutase activity in the cell. Key enzyme in hexose metabolism. The forward reaction is an essential step in the energy metabolism of galactose since the product of the galactose pathway enzymes in yeast is glucose 1-phosphate. The reverse reaction is an essential step for biosynthesis when carbon sources other than galactose are the energy source because glucose 1-phosphate is the starting point for the synthesis of UDP-glucose, which acts as a precursor for the synthesis of oligosaccharides and trehalose. This is Phosphoglucomutase 2 from Saccharomyces cerevisiae (strain ATCC 204508 / S288c) (Baker's yeast).